Here is a 228-residue protein sequence, read N- to C-terminus: Cytidylate kinase (228 aa).

Position 11–19 (11–19 (GPASAGKST)) interacts with ATP.

It belongs to the cytidylate kinase family. Type 1 subfamily.

The protein localises to the cytoplasm. The enzyme catalyses CMP + ATP = CDP + ADP. The catalysed reaction is dCMP + ATP = dCDP + ADP. The polypeptide is Cytidylate kinase (Limosilactobacillus reuteri (strain DSM 20016) (Lactobacillus reuteri)).